The chain runs to 131 residues: Small ribosomal subunit protein uS8 (131 aa).

Belongs to the universal ribosomal protein uS8 family. In terms of assembly, part of the 30S ribosomal subunit. Contacts proteins S5 and S12.

One of the primary rRNA binding proteins, it binds directly to 16S rRNA central domain where it helps coordinate assembly of the platform of the 30S subunit. The chain is Small ribosomal subunit protein uS8 from Paracidovorax citrulli (strain AAC00-1) (Acidovorax citrulli).